The primary structure comprises 298 residues: Probable endonuclease 4 (298 aa).

The Zn(2+) site is built by His-69, His-111, Glu-146, Asp-180, His-183, His-215, Asp-228, His-230, and Glu-260.

It belongs to the AP endonuclease 2 family. Zn(2+) is required as a cofactor.

The enzyme catalyses Endonucleolytic cleavage to 5'-phosphooligonucleotide end-products.. Endonuclease IV plays a role in DNA repair. It cleaves phosphodiester bonds at apurinic or apyrimidinic (AP) sites, generating a 3'-hydroxyl group and a 5'-terminal sugar phosphate. This Bacillus mycoides (strain KBAB4) (Bacillus weihenstephanensis) protein is Probable endonuclease 4.